The primary structure comprises 124 residues: Small ribosomal subunit protein eS6 (124 aa).

This sequence belongs to the eukaryotic ribosomal protein eS6 family.

The sequence is that of Small ribosomal subunit protein eS6 from Thermoplasma acidophilum (strain ATCC 25905 / DSM 1728 / JCM 9062 / NBRC 15155 / AMRC-C165).